The sequence spans 149 residues: Ribonuclease pancreatic (149 aa).

Residues 1–25 form the signal peptide; that stretch reads MGLEKSFILFSLLVLVLGWVQPSLG. K32 and R35 together coordinate substrate. The active-site Proton acceptor is H37. Disulfide bonds link C51-C109, C65-C120, C83-C135, and C90-C97. Substrate-binding positions include 66–70, K91, and R110; that span reads KPVNT. H144 serves as the catalytic Proton donor.

This sequence belongs to the pancreatic ribonuclease family. In terms of assembly, monomer. Interacts with and forms tight 1:1 complexes with RNH1. Dimerization of two such complexes may occur. Interaction with RNH1 inhibits this protein. In terms of tissue distribution, pancreas.

It localises to the secreted. The enzyme catalyses an [RNA] containing cytidine + H2O = an [RNA]-3'-cytidine-3'-phosphate + a 5'-hydroxy-ribonucleotide-3'-[RNA].. It catalyses the reaction an [RNA] containing uridine + H2O = an [RNA]-3'-uridine-3'-phosphate + a 5'-hydroxy-ribonucleotide-3'-[RNA].. In terms of biological role, endonuclease that catalyzes the cleavage of RNA on the 3' side of pyrimidine nucleotides. Acts on single-stranded and double-stranded RNA. This chain is Ribonuclease pancreatic (RNASE1), found in Leopoldamys edwardsi (Edwards's long-tailed giant rat).